Consider the following 169-residue polypeptide: Der GTPase-activating protein YihI (169 aa).

Disordered stretches follow at residues 1–83 (MNPL…PTKP) and 150–169 (DEEEREEEKQDDIMQLLKGN). The segment covering 21–30 (NREELNAEGR) has biased composition (basic and acidic residues). Residues 31 to 40 (ARKREKKHRG) are compositionally biased toward basic residues. Basic and acidic residues-rich tracts occupy residues 51–66 (SGDKHPSGKQQRDPRL) and 150–161 (DEEEREEEKQDD).

It belongs to the YihI family. As to quaternary structure, interacts with Der.

In terms of biological role, a GTPase-activating protein (GAP) that modifies Der/EngA GTPase function. May play a role in ribosome biogenesis. This Photorhabdus laumondii subsp. laumondii (strain DSM 15139 / CIP 105565 / TT01) (Photorhabdus luminescens subsp. laumondii) protein is Der GTPase-activating protein YihI.